The sequence spans 617 residues: Estrogen receptor (617 aa).

A disordered region spans residues 1–54; sequence MSEEQARAEAPAGARQRRRSELEGYSVSLASLKLSPMYPEEEQRTTGGISSTAH. The tract at residues 1–186 is modulating; it reads MSEEQARAEA…AIGLVKEIRY (186 aa). 2 NR C4-type zinc fingers span residues 187 to 207 and 223 to 247; these read CSVCSDYASGYHYGVWSCEGC and CPATNQCTIDRNRRKSCQACRLRKC. The nuclear receptor DNA-binding region spans 187 to 252; sequence CSVCSDYASG…RLRKCYEVGM (66 aa). The segment at 253–315 is hinge; it reads MKGGFRKERG…GGGVADVVCM (63 aa). The segment at 269–303 is disordered; that stretch reads NRRPSGLKERERGYSKAQSGSDVREALPQDGQSSS. Residues 316 to 552 form the NR LBD domain; that stretch reads SPEQVLLLLL…DLLLEMLDAH (237 aa). Positions 568 to 617 are disordered; that stretch reads VSSSPTTTATTPTTNTTTTTTTTTHHPSNGSTCPADLPSNPPGPGQSPSP. Over residues 573 to 591 the composition is skewed to low complexity; sequence TTTATTPTTNTTTTTTTTT. The segment covering 606-617 has biased composition (pro residues); the sequence is SNPPGPGQSPSP.

Belongs to the nuclear hormone receptor family. NR3 subfamily. In terms of assembly, binds DNA as a homodimer. Can form a heterodimer with ER-beta. Ovary and testis.

Its subcellular location is the nucleus. In terms of biological role, the steroid hormones and their receptors are involved in the regulation of eukaryotic gene expression and affect cellular proliferation and differentiation in target tissues. The polypeptide is Estrogen receptor (esr1) (Ictalurus punctatus (Channel catfish)).